A 421-amino-acid polypeptide reads, in one-letter code: Ubiquitin-like modifier-activating enzyme 5 (421 aa).

Residues G89, D110, K133, N156, and N191 each contribute to the ATP site. Zn(2+) contacts are provided by C233 and C236. C257 acts as the Glycyl thioester intermediate in catalysis. Positions 310 and 315 each coordinate Zn(2+).

The protein belongs to the ubiquitin-activating E1 family. UBA5 subfamily.

Functionally, E1-like enzyme which activates UFM1. This Oryza sativa subsp. japonica (Rice) protein is Ubiquitin-like modifier-activating enzyme 5.